The sequence spans 485 residues: Catalase isozyme 1 (485 aa).

Residues His58 and Asn131 contribute to the active site. Tyr341 contributes to the heme binding site.

It belongs to the catalase family. As to quaternary structure, homotetramer. It depends on heme as a cofactor.

Its subcellular location is the peroxisome. The enzyme catalyses 2 H2O2 = O2 + 2 H2O. Its function is as follows. Occurs in almost all aerobically respiring organisms and serves to protect cells from the toxic effects of hydrogen peroxide. The protein is Catalase isozyme 1 (CAT1) of Nicotiana plumbaginifolia (Leadwort-leaved tobacco).